A 120-amino-acid chain; its full sequence is MKLNTKQTRIHKHKRVRKKVQGTSSRPRLCVFRSNKHIYAQIIDDTQGITLVATSSVNLNNKESDNIRPNCDTSRVVGKQLAEQSMKEGIKNVVFDRGGKLYHGRVKALAEAAKEAGMGF.

This sequence belongs to the universal ribosomal protein uL18 family. As to quaternary structure, part of the 50S ribosomal subunit; contacts the 5S rRNA.

Its subcellular location is the plastid. It localises to the chloroplast. Binds 5S rRNA, forms part of the central protuberance of the 50S subunit. The protein is Large ribosomal subunit protein uL18c (rpl18) of Pyropia yezoensis (Susabi-nori).